Consider the following 163-residue polypeptide: Anthranilate 1,2-dioxygenase small subunit (163 aa).

The protein belongs to the bacterial ring-hydroxylating dioxygenase beta subunit family. In terms of assembly, the anthranilate dioxygenase (AntDO) multicomponent enzyme system is composed of an oxygenase component and a NADH:acceptor reductase component (AntC). The oxygenase component is a heterohexamer of 3 large (AntA) and 3 small (AntB) subunits.

It catalyses the reaction anthranilate + NADH + O2 + 3 H(+) = catechol + NH4(+) + CO2 + NAD(+). The catalysed reaction is anthranilate + NADPH + O2 + 3 H(+) = catechol + NH4(+) + CO2 + NADP(+). The protein operates within aromatic compound metabolism; anthranilate degradation via hydroxylation; catechol from anthranilate: step 1/1. Its function is as follows. Component of anthranilate dioxygenase multicomponent enzyme system which catalyzes the incorporation of both atoms of molecular oxygen into anthranilate to form catechol. In Acinetobacter baylyi (strain ATCC 33305 / BD413 / ADP1), this protein is Anthranilate 1,2-dioxygenase small subunit.